Reading from the N-terminus, the 95-residue chain is RING finger protein Z (95 aa).

G2 carries the N-myristoyl glycine; by host lipid modification. Residues 38 to 74 (CKRCWFATKGLIACSDHYLCLNCLTIMLSDGNFCEVC) form an RING-type; atypical zinc finger. Residues 88–91 (PSAP) carry the PTAP/PSAP motif motif.

It belongs to the arenaviridae Z protein family. As to quaternary structure, interacts with protein NP; this interaction probably directs the encapsidated genome to budding sites. Interacts (via RING domain) with polymerase L; this interaction inhibits viral transcription and replication, Z partially blocks the product exit tunnel for the releasing nascent RNA product. Interacts with the glycoprotein complex; this interaction plays a role in virion budding. Interacts with host eIF4E; this interaction results in eIF4E reduced affinity for its substrate, the 5'-m7 G cap structure. Interacts (via late-budding domain) with host TSG101; this interaction is essential for budding and release of viral particles. Interacts with host RPLP0; this interaction may serve to load ribosome-like particles inside the virion. Interacts with host PML; this interaction induces PML bodies redistribution in the cytoplasm upon viral infection. Post-translationally, myristoylation is required for the role of RING finger protein Z in assembly and budding.

It localises to the virion. The protein resides in the host cytoplasm. The protein localises to the host perinuclear region. Its subcellular location is the host cell membrane. Functionally, plays a crucial role in virion assembly and budding. Expressed late in the virus life cycle, it acts as an inhibitor of viral transcription and RNA synthesis by interacting with the viral polymerase L. Presumably recruits the NP encapsidated genome to cellular membranes at budding sites via direct interaction with NP. Plays critical roles in the final steps of viral release by interacting with host TSG101, a member of the vacuolar protein-sorting pathway and using other cellular host proteins involved in vesicle formation pathway. The budding of the virus progeny occurs after association of protein Z with the viral glycoprotein complex SSP-GP1-GP2 at the cell periphery, step that requires myristoylation of protein Z. Also selectively represses protein production by associating with host eIF4E. In cell-based minigenome assay, has an inhibitory effect on the ribonucleoprotein machinery (vRNP), which is responsible for the replication and transcription of the viral genome. This chain is RING finger protein Z, found in Sooretamys angouya (Paraguayan rice rat).